A 494-amino-acid chain; its full sequence is Amidophosphoribosyltransferase (494 aa).

A propeptide spanning residues 1-10 (MSNYSGLNEE) is cleaved from the precursor. The active-site Nucleophile is cysteine 11. The region spanning 11 to 231 (CGVFGIWNHP…AGEYVVITDE (221 aa)) is the Glutamine amidotransferase type-2 domain. Serine 294, aspartate 356, and aspartate 357 together coordinate Mg(2+).

It in the C-terminal section; belongs to the purine/pyrimidine phosphoribosyltransferase family. Mg(2+) is required as a cofactor.

The catalysed reaction is 5-phospho-beta-D-ribosylamine + L-glutamate + diphosphate = 5-phospho-alpha-D-ribose 1-diphosphate + L-glutamine + H2O. It participates in purine metabolism; IMP biosynthesis via de novo pathway; N(1)-(5-phospho-D-ribosyl)glycinamide from 5-phospho-alpha-D-ribose 1-diphosphate: step 1/2. Functionally, catalyzes the formation of phosphoribosylamine from phosphoribosylpyrophosphate (PRPP) and glutamine. The chain is Amidophosphoribosyltransferase from Staphylococcus epidermidis (strain ATCC 35984 / DSM 28319 / BCRC 17069 / CCUG 31568 / BM 3577 / RP62A).